A 491-amino-acid chain; its full sequence is Bifunctional NAD(P)H-hydrate repair enzyme Nnr (491 aa).

Residues 1 to 230 (MRRDINNFLF…KIGIPKEAEY (230 aa)) form an NAD(P)H-hydrate epimerase region. One can recognise a YjeF N-terminal domain in the interval 35 to 230 (MAIIDDNAEF…KIGIPKEAEY (196 aa)). The NADPHX 1; for epimerase activity stretch occupies residues 80-84 (NNGGD). 2 residues coordinate K(+): Asn81 and Asp154. The NADPHX 1; for epimerase activity stretch occupies residues 158–164 (GTGVKGE). Residue Asp192 coordinates (6S)-NADPHX. Position 195 (Thr195) interacts with K(+). Residues 232–490 (VGWGDLKALR…EKIPNVLKIF (259 aa)) form the YjeF C-terminal domain. The tract at residues 232–491 (VGWGDLKALR…KIPNVLKIFQ (260 aa)) is ADP-dependent (S)-NAD(P)H-hydrate dehydratase. Position 332 (Gly332) interacts with (6S)-NADPHX. The segment at 380 to 386 (HKREFEY) is NADPHX 2; for dehydratase activity. ADP contacts are provided by residues 404–408 (KGKYD) and 423–432 (NAGLTKGGTG). Residue Asp433 coordinates (6S)-NADPHX.

This sequence in the N-terminal section; belongs to the NnrE/AIBP family. The protein in the C-terminal section; belongs to the NnrD/CARKD family. Requires K(+) as cofactor.

The enzyme catalyses (6S)-NADHX + ADP = AMP + phosphate + NADH + H(+). It carries out the reaction (6S)-NADPHX + ADP = AMP + phosphate + NADPH + H(+). The catalysed reaction is (6R)-NADHX = (6S)-NADHX. It catalyses the reaction (6R)-NADPHX = (6S)-NADPHX. In terms of biological role, bifunctional enzyme that catalyzes the epimerization of the S- and R-forms of NAD(P)HX and the dehydration of the S-form of NAD(P)HX at the expense of ADP, which is converted to AMP. This allows the repair of both epimers of NAD(P)HX, a damaged form of NAD(P)H that is a result of enzymatic or heat-dependent hydration. The chain is Bifunctional NAD(P)H-hydrate repair enzyme Nnr (nnr) from Methanocaldococcus jannaschii (strain ATCC 43067 / DSM 2661 / JAL-1 / JCM 10045 / NBRC 100440) (Methanococcus jannaschii).